The following is a 358-amino-acid chain: Ethanol acetyltransferase 1 (358 aa).

The 108-residue stretch at P59–S166 folds into the AB hydrolase-1 domain. Catalysis depends on charge relay system residues S132, D156, and H305.

The protein belongs to the AB hydrolase superfamily.

The protein resides in the mitochondrion. It carries out the reaction ethanol + acetyl-CoA = ethyl acetate + CoA. The enzyme catalyses acetyl-CoA + H2O = acetate + CoA + H(+). The catalysed reaction is ethyl acetate + H2O = ethanol + acetate + H(+). Alcohol acetyltransferase that catalyzes the synthesis of ethyl acetate from ethanol and acetyl-CoA. Can also function as a thioesterase by hydrolyzing acetyl-CoA in the absence of ethanol, as well as esterase hydrolyzing ethyl acetate. The sequence is that of Ethanol acetyltransferase 1 (EAT1) from Eremothecium cymbalariae (strain CBS 270.75 / DBVPG 7215 / KCTC 17166 / NRRL Y-17582) (Yeast).